The chain runs to 223 residues: Proteasome subunit beta type-1 (223 aa).

The protein belongs to the peptidase T1B family. As to quaternary structure, the 26S proteasome consists of a 20S proteasome core and two 19S regulatory subunits. The 20S proteasome core is composed of 28 subunits that are arranged in four stacked rings, resulting in a barrel-shaped structure. The two end rings are each formed by seven alpha subunits, and the two central rings are each formed by seven beta subunits. The catalytic chamber with the active sites is on the inside of the barrel.

It is found in the cytoplasm. Its subcellular location is the nucleus. Functionally, non-catalytic component of the proteasome, a multicatalytic proteinase complex which is characterized by its ability to cleave peptides with Arg, Phe, Tyr, Leu, and Glu adjacent to the leaving group at neutral or slightly basic pH. The proteasome has an ATP-dependent proteolytic activity. The chain is Proteasome subunit beta type-1 (PBF1) from Petunia hybrida (Petunia).